The sequence spans 161 residues: Transcription elongation factor GreA (161 aa).

The stretch at 45–72 (NAEYHSAKEKLKLIDIQIAELNAVISKA) forms a coiled coil.

This sequence belongs to the GreA/GreB family.

Functionally, necessary for efficient RNA polymerase transcription elongation past template-encoded arresting sites. The arresting sites in DNA have the property of trapping a certain fraction of elongating RNA polymerases that pass through, resulting in locked ternary complexes. Cleavage of the nascent transcript by cleavage factors such as GreA or GreB allows the resumption of elongation from the new 3'terminus. GreA releases sequences of 2 to 3 nucleotides. In Aliarcobacter butzleri (strain RM4018) (Arcobacter butzleri), this protein is Transcription elongation factor GreA.